Consider the following 307-residue polypeptide: Serine/threonine-protein phosphatase PP2A-1 catalytic subunit (307 aa).

Mn(2+) contacts are provided by Asp-54, His-56, Asp-82, and Asn-114. The active-site Proton donor is His-115. Mn(2+) is bound by residues His-164 and His-238. The interval 286-307 is disordered; sequence FEPAPRRGAEGEVNRRTPDYFL. Basic and acidic residues predominate over residues 289 to 307; the sequence is APRRGAEGEVNRRTPDYFL.

It belongs to the PPP phosphatase family. PP-2A subfamily. The cofactor is Mn(2+).

It catalyses the reaction O-phospho-L-seryl-[protein] + H2O = L-seryl-[protein] + phosphate. The enzyme catalyses O-phospho-L-threonyl-[protein] + H2O = L-threonyl-[protein] + phosphate. The protein is Serine/threonine-protein phosphatase PP2A-1 catalytic subunit of Acetabularia peniculus (Green alga).